The following is a 237-amino-acid chain: Sulfhydrogenase 2 subunit delta (237 aa).

[4Fe-4S] cluster contacts are provided by Cys-11, Cys-14, Cys-83, Cys-132, Cys-160, Cys-163, Cys-170, and Cys-179. Positions 188, 192, 199, and 202 each coordinate [3Fe-4S] cluster.

This sequence belongs to the [NiFe]/[NiFeSe] hydrogenase small subunit family. Dimer of heterotetramer of alpha, beta, gamma and delta subunits. The nickel-containing alpha and delta subunits constitute the hydrogenase activity. The beta and gamma subunits (flavin-containing dimer) constitute the sulfur reductase activity. Ni(2+) is required as a cofactor. [4Fe-4S] cluster serves as cofactor. It depends on [3Fe-4S] cluster as a cofactor.

It localises to the cytoplasm. It catalyses the reaction H2 + NADP(+) = NADPH + H(+). It carries out the reaction H2 + NAD(+) = NADH + H(+). Part of a bifunctional enzyme complex that functions as a hydrogen-evolving hydrogenase with sulfur-reducing activity. May play a role in hydrogen cycling during fermentative growth. Activity exhibited with NAD in addition to NADPH. The alpha and delta subunits form the hydrogenase component that catalyzes the reduction of protons to evolve hydrogen. The protein is Sulfhydrogenase 2 subunit delta of Pyrococcus furiosus (strain ATCC 43587 / DSM 3638 / JCM 8422 / Vc1).